Reading from the N-terminus, the 24-residue chain is Brevinin-1Ba (24 aa).

An intrachain disulfide couples Cys18 to Cys24.

Expressed by the skin glands.

It localises to the secreted. In terms of biological role, antibacterial activity against Gram-positive bacterium S.aureus. The sequence is that of Brevinin-1Ba from Lithobates berlandieri (Rio Grande leopard frog).